The following is a 480-amino-acid chain: MAAVGAALGPLVTGLYDVQAFKFGDFVLKSGLSSPIYIDLRGIVSRPRLLSQVADTLFQTAQNAGISFDTVCGVPYTALPLATVICSTNQIPMLIRRKETKDYGTKRLVEGTINPGETCLIIEDVVTSGSSVLETAEVLQKEGLKVTDAIVLLDREQGGKDKLQAHGIRLHSVCTLSKMLEILEQQKKIDAETVGRVKRFIQENVFVAANHNGSPLSIKEAPKELSFSARAELPRIHPVASKLLRLMQKKETNLCLSADVSEARELLQLADALGPSICMLKTHVDILNDFTLDVMKELITLAKRHEFLIFEDRKFADIGNTVKKQYEGGVFKIASWADLVNAHVVPGSGVVKGLQEVGLPLHRGCLLIAEMSSTGSLATGDYTRAAVRMAEEHSEFVVGFISGSRVSMKPEFLHLTPGVQLEAGGDNLGQQYNSPQEVIGKRGSDIIIVGRGIISAADCLEAAEMYRKAAWEAYLSRLGV.

An N-acetylalanine modification is found at Ala-2. Residues 2-214 are OPRTase; it reads AAVGAALGPL…VFVAANHNGS (213 aa). Position 37 is a phosphotyrosine (Tyr-37). Ser-214 is modified (phosphoserine). Positions 215-220 are domain linker; that stretch reads PLSIKE. Residues 221-480 form an OMPdecase region; that stretch reads APKELSFSAR…WEAYLSRLGV (260 aa). Position 257 (Ser-257) interacts with orotidine 5'-phosphate. Residues Ser-257, Asp-259, and 281 to 283 each bind UMP; that span reads KTH. Residues Lys-281, Lys-314, Asp-317, Thr-321, Ser-372, 430 to 432, and 450 to 451 contribute to the orotidine 5'-phosphate site; these read QQY and GR. Active-site for OMPdecase activity residues include Lys-314 and Asp-317. Residues Asp-317, Thr-321, Ser-372, 430–432, and 450–451 contribute to the UMP site; these read QQY and GR.

In the N-terminal section; belongs to the purine/pyrimidine phosphoribosyltransferase family. This sequence in the C-terminal section; belongs to the OMP decarboxylase family. In terms of assembly, homodimer; dimerization is required for enzymatic activity.

It carries out the reaction orotidine 5'-phosphate + diphosphate = orotate + 5-phospho-alpha-D-ribose 1-diphosphate. The enzyme catalyses orotidine 5'-phosphate + H(+) = UMP + CO2. The protein operates within pyrimidine metabolism; UMP biosynthesis via de novo pathway; UMP from orotate: step 1/2. It participates in pyrimidine metabolism; UMP biosynthesis via de novo pathway; UMP from orotate: step 2/2. Functionally, bifunctional enzyme catalyzing the last two steps of de novo pyrimidine biosynthesis, orotate phosphoribosyltransferase (OPRT), which converts orotate to orotidine-5'-monophosphate (OMP), and orotidine-5'-monophosphate decarboxylase (ODC), the terminal enzymatic reaction that decarboxylates OMP to uridine monophosphate (UMP). The sequence is that of Uridine 5'-monophosphate synthase (UMPS) from Pongo abelii (Sumatran orangutan).